The following is a 756-amino-acid chain: Putative beta-xylosidase (756 aa).

A signal peptide spans 1 to 18 (MKKLLFTFLVSTGTIFFS). C19 carries the N-palmitoyl cysteine lipid modification. C19 is lipidated: S-diacylglycerol cysteine.

It belongs to the glycosyl hydrolase 3 family.

It is found in the cell outer membrane. Its function is as follows. Glycoside hydrolase probably involved in ulvan degradation. Ulvan is the main polysaccharide component of the Ulvales (green seaweed) cell wall. It is composed of disaccharide building blocks comprising 3-sulfated rhamnose (Rha3S) linked to D-glucuronic acid (GlcA), L-iduronic acid (IduA), or D-xylose (Xyl). This Formosa agariphila (strain DSM 15362 / KCTC 12365 / LMG 23005 / KMM 3901 / M-2Alg 35-1) protein is Putative beta-xylosidase.